The following is a 104-amino-acid chain: Large ribosomal subunit protein uL24 (104 aa).

It belongs to the universal ribosomal protein uL24 family. Part of the 50S ribosomal subunit.

Its function is as follows. One of two assembly initiator proteins, it binds directly to the 5'-end of the 23S rRNA, where it nucleates assembly of the 50S subunit. Functionally, one of the proteins that surrounds the polypeptide exit tunnel on the outside of the subunit. The sequence is that of Large ribosomal subunit protein uL24 from Pseudomonas savastanoi pv. phaseolicola (strain 1448A / Race 6) (Pseudomonas syringae pv. phaseolicola (strain 1448A / Race 6)).